The primary structure comprises 607 residues: Probable LRR receptor-like serine/threonine-protein kinase At5g65240 (607 aa).

An N-terminal signal peptide occupies residues Met1–Gly24. Residues Asp25–Gly219 are Extracellular-facing. N-linked (GlcNAc...) asparagine glycosylation is found at Asn74 and Asn110. 4 LRR repeats span residues Leu87 to Leu111, Ser112 to Leu135, Asn137 to Leu159, and Ser160 to Ile183. N-linked (GlcNAc...) asparagine glycans are attached at residues Asn149, Asn171, Asn187, and Asn192. A helical transmembrane segment spans residues Ile220 to Phe240. Topologically, residues Cys241–Arg607 are cytoplasmic. Thr281 carries the phosphothreonine modification. Residues Phe284–Glu568 form the Protein kinase domain. Residue Leu290–Val298 coordinates ATP. At Thr307 the chain carries Phosphothreonine. Lys312 is an ATP binding site. Ser365 is modified (phosphoserine). Catalysis depends on Asp411, which acts as the Proton acceptor. 3 positions are modified to phosphothreonine: Thr444, Thr445, and Thr450. Ser460 carries the phosphoserine modification. Thr461 carries the post-translational modification Phosphothreonine. Ser465 bears the Phosphoserine mark. The residue at position 541 (Thr541) is a Phosphothreonine.

It belongs to the protein kinase superfamily. Ser/Thr protein kinase family.

The protein localises to the cell membrane. The enzyme catalyses L-seryl-[protein] + ATP = O-phospho-L-seryl-[protein] + ADP + H(+). The catalysed reaction is L-threonyl-[protein] + ATP = O-phospho-L-threonyl-[protein] + ADP + H(+). The chain is Probable LRR receptor-like serine/threonine-protein kinase At5g65240 from Arabidopsis thaliana (Mouse-ear cress).